The chain runs to 266 residues: Undecaprenyl-diphosphatase 3 (266 aa).

The next 8 helical transmembrane spans lie at 4 to 24, 43 to 63, 86 to 106, 109 to 129, 145 to 165, 186 to 206, 219 to 239, and 246 to 266; these read IEAF…FLPI, SGRA…CWLY, FSVL…VDFI, VLFS…IIFW, ITFK…IPGT, TEFS…YDLL, NIGL…KALV, and TLRV…FVML.

Belongs to the UppP family.

It localises to the cell inner membrane. The catalysed reaction is di-trans,octa-cis-undecaprenyl diphosphate + H2O = di-trans,octa-cis-undecaprenyl phosphate + phosphate + H(+). Catalyzes the dephosphorylation of undecaprenyl diphosphate (UPP). Confers resistance to bacitracin. This is Undecaprenyl-diphosphatase 3 from Acinetobacter baylyi (strain ATCC 33305 / BD413 / ADP1).